The chain runs to 123 residues: Small ribosomal subunit protein uS13 (123 aa).

Residues 94-123 (RRGLPVRGQHTKNNARTRKGPARAIAGKKK) are disordered.

The protein belongs to the universal ribosomal protein uS13 family. As to quaternary structure, part of the 30S ribosomal subunit. Forms a loose heterodimer with protein S19. Forms two bridges to the 50S subunit in the 70S ribosome.

Located at the top of the head of the 30S subunit, it contacts several helices of the 16S rRNA. In the 70S ribosome it contacts the 23S rRNA (bridge B1a) and protein L5 of the 50S subunit (bridge B1b), connecting the 2 subunits; these bridges are implicated in subunit movement. Contacts the tRNAs in the A and P-sites. This Oenococcus oeni (strain ATCC BAA-331 / PSU-1) protein is Small ribosomal subunit protein uS13.